The following is a 542-amino-acid chain: Quinidine resistance protein 2 (542 aa).

Over methionine 1–cysteine 67 the chain is Cytoplasmic. A Phosphoserine modification is found at serine 21. Threonine 38 carries the post-translational modification Phosphothreonine. Position 40 is a phosphoserine (serine 40). The chain crosses the membrane as a helical span at residues alanine 68–isoleucine 88. Residues glutamate 89–asparagine 100 lie on the Extracellular side of the membrane. The helical transmembrane segment at valine 101 to alanine 121 threads the bilayer. The Cytoplasmic portion of the chain corresponds to aspartate 122–arginine 127. Residues proline 128–glutamine 148 form a helical membrane-spanning segment. A topological domain (extracellular) is located at residue threonine 149. The chain crosses the membrane as a helical span at residues tyrosine 150 to isoleucine 170. The Cytoplasmic segment spans residues asparagine 171–tyrosine 187. The chain crosses the membrane as a helical span at residues valine 188–glycine 208. The Extracellular portion of the chain corresponds to leucine 209–arginine 216. The helical transmembrane segment at alanine 217–leucine 237 threads the bilayer. The Cytoplasmic segment spans residues proline 238–glutamate 300. A helical transmembrane segment spans residues isoleucine 301–alanine 321. Residues leucine 322 to threonine 333 lie on the Extracellular side of the membrane. A helical transmembrane segment spans residues valine 334–isoleucine 354. The Cytoplasmic portion of the chain corresponds to alanine 355–proline 413. A helical membrane pass occupies residues alanine 414–valine 434. Over lysine 435 to proline 437 the chain is Extracellular. Residues leucine 438–phenylalanine 458 traverse the membrane as a helical segment. The Cytoplasmic portion of the chain corresponds to serine 459–serine 472. The helical transmembrane segment at threonine 473–leucine 493 threads the bilayer. Topologically, residues serine 494–glycine 503 are extracellular. A helical membrane pass occupies residues glycine 504–leucine 524. Residues arginine 525–asparagine 542 are Cytoplasmic-facing.

The protein belongs to the major facilitator superfamily. CAR1 family.

The protein localises to the cell membrane. Its function is as follows. Multidrug resistance transporter involved in resistance and adaptation to quinidine and to the herbicide barban (4-chloro-2-butynyl [3-chlorophenyl] carbamate). Implicated in potassium uptake. This chain is Quinidine resistance protein 2 (QDR2), found in Saccharomyces cerevisiae (strain ATCC 204508 / S288c) (Baker's yeast).